The following is a 214-amino-acid chain: Alpha-S1-casein (214 aa).

The first 15 residues, 1-15 (MKLLILTCLVAVALA), serve as a signal peptide directing secretion. Positions 59–91 (IGSESTEDQAMEDAKQMKAGSSSSSEEIVPNSA) are disordered. Phosphoserine is present on residues serine 61, serine 63, serine 79, serine 80, serine 81, serine 82, serine 83, serine 90, and serine 130.

This sequence belongs to the alpha-casein family. As to expression, mammary gland specific. Secreted in milk.

It is found in the secreted. Its function is as follows. Important role in the capacity of milk to transport calcium phosphate. The polypeptide is Alpha-S1-casein (CSN1S1) (Capra hircus (Goat)).